The chain runs to 142 residues: Mediator of RNA polymerase II transcription subunit 21 (142 aa).

A coiled-coil region spans residues 87–131 (AEEQLSRIDSLQKKLIQVEGEKIEAIKRKESLTKDIEELINEFTE).

The protein belongs to the Mediator complex subunit 21 family. Component of the Mediator complex.

It localises to the nucleus. Its function is as follows. Component of the Mediator complex, a coactivator involved in the regulated transcription of nearly all RNA polymerase II-dependent genes. Mediator functions as a bridge to convey information from gene-specific regulatory proteins to the basal RNA polymerase II transcription machinery. Mediator is recruited to promoters by direct interactions with regulatory proteins and serves as a scaffold for the assembly of a functional preinitiation complex with RNA polymerase II and the general transcription factors. In Eremothecium gossypii (strain ATCC 10895 / CBS 109.51 / FGSC 9923 / NRRL Y-1056) (Yeast), this protein is Mediator of RNA polymerase II transcription subunit 21 (SRB7).